Here is a 144-residue protein sequence, read N- to C-terminus: Toxin MT0934 (144 aa).

Functionally, toxic component of a type II toxin-antitoxin (TA) system. Its toxic effect is neutralized by coexpression with cognate antitoxin MT0933. In Mycobacterium tuberculosis (strain CDC 1551 / Oshkosh), this protein is Toxin MT0934.